Reading from the N-terminus, the 349-residue chain is UDP-N-acetylenolpyruvoylglucosamine reductase (349 aa).

Positions 25 to 197 (GIDARARYAA…VSVTFRLPKR (173 aa)) constitute an FAD-binding PCMH-type domain. Residue arginine 173 is part of the active site. Serine 249 acts as the Proton donor in catalysis. Residue glutamate 345 is part of the active site.

Belongs to the MurB family. It depends on FAD as a cofactor.

It is found in the cytoplasm. It catalyses the reaction UDP-N-acetyl-alpha-D-muramate + NADP(+) = UDP-N-acetyl-3-O-(1-carboxyvinyl)-alpha-D-glucosamine + NADPH + H(+). It functions in the pathway cell wall biogenesis; peptidoglycan biosynthesis. Functionally, cell wall formation. This is UDP-N-acetylenolpyruvoylglucosamine reductase from Burkholderia multivorans (strain ATCC 17616 / 249).